The sequence spans 306 residues: tRNA pseudouridine synthase B (306 aa).

The Nucleophile role is filled by Asp47.

This sequence belongs to the pseudouridine synthase TruB family. Type 1 subfamily.

The enzyme catalyses uridine(55) in tRNA = pseudouridine(55) in tRNA. In terms of biological role, responsible for synthesis of pseudouridine from uracil-55 in the psi GC loop of transfer RNAs. The sequence is that of tRNA pseudouridine synthase B from Neisseria meningitidis serogroup A / serotype 4A (strain DSM 15465 / Z2491).